The chain runs to 397 residues: Bifunctional enzyme IspD/IspF (397 aa).

The 2-C-methyl-D-erythritol 4-phosphate cytidylyltransferase stretch occupies residues 1-236 (MSIAAVILAA…QKKMQMFPDI (236 aa)). A 2-C-methyl-D-erythritol 2,4-cyclodiphosphate synthase region spans residues 237–397 (RTGNGYDVHS…NVLYPGEIPK (161 aa)). Residues Asp243 and His245 each coordinate a divalent metal cation. Residues 243 to 245 (DVH) and 269 to 270 (HS) each bind 4-CDP-2-C-methyl-D-erythritol 2-phosphate. His277 serves as a coordination point for a divalent metal cation. Residues 291–293 (DIG), 367–370 (TTNE), Phe374, and Arg377 contribute to the 4-CDP-2-C-methyl-D-erythritol 2-phosphate site.

In the N-terminal section; belongs to the IspD/TarI cytidylyltransferase family. IspD subfamily. It in the C-terminal section; belongs to the IspF family. A divalent metal cation is required as a cofactor.

The enzyme catalyses 2-C-methyl-D-erythritol 4-phosphate + CTP + H(+) = 4-CDP-2-C-methyl-D-erythritol + diphosphate. It catalyses the reaction 4-CDP-2-C-methyl-D-erythritol 2-phosphate = 2-C-methyl-D-erythritol 2,4-cyclic diphosphate + CMP. It functions in the pathway isoprenoid biosynthesis; isopentenyl diphosphate biosynthesis via DXP pathway; isopentenyl diphosphate from 1-deoxy-D-xylulose 5-phosphate: step 2/6. Its pathway is isoprenoid biosynthesis; isopentenyl diphosphate biosynthesis via DXP pathway; isopentenyl diphosphate from 1-deoxy-D-xylulose 5-phosphate: step 4/6. Bifunctional enzyme that catalyzes the formation of 4-diphosphocytidyl-2-C-methyl-D-erythritol from CTP and 2-C-methyl-D-erythritol 4-phosphate (MEP) (IspD), and catalyzes the conversion of 4-diphosphocytidyl-2-C-methyl-D-erythritol 2-phosphate (CDP-ME2P) to 2-C-methyl-D-erythritol 2,4-cyclodiphosphate (ME-CPP) with a corresponding release of cytidine 5-monophosphate (CMP) (IspF). This Bartonella henselae (strain ATCC 49882 / DSM 28221 / CCUG 30454 / Houston 1) (Rochalimaea henselae) protein is Bifunctional enzyme IspD/IspF.